A 904-amino-acid polypeptide reads, in one-letter code: UPF0182 protein CKL_0015 (904 aa).

The next 7 membrane-spanning stretches (helical) occupy residues Ser-9–Ile-29, Leu-47–Leu-67, Ile-96–Tyr-116, Ile-157–Val-177, Leu-208–Ile-228, Tyr-253–Val-273, and Ile-279–Val-299.

The protein belongs to the UPF0182 family.

It localises to the cell membrane. In Clostridium kluyveri (strain ATCC 8527 / DSM 555 / NBRC 12016 / NCIMB 10680 / K1), this protein is UPF0182 protein CKL_0015.